Here is a 278-residue protein sequence, read N- to C-terminus: Undecaprenyl-diphosphatase (278 aa).

8 consecutive transmembrane segments (helical) span residues 14 to 34, 40 to 60, 89 to 109, 121 to 141, 153 to 173, 196 to 216, 227 to 247, and 257 to 277; these read GTTE…PWLF, GLAF…AYFW, WAVI…NDVI, TAIV…WLAE, LGLR…LPGV, FSFI…TLKL, VLFV…IAFL, and SIFI…VSFA.

This sequence belongs to the UppP family.

It is found in the cell membrane. It catalyses the reaction di-trans,octa-cis-undecaprenyl diphosphate + H2O = di-trans,octa-cis-undecaprenyl phosphate + phosphate + H(+). Its function is as follows. Catalyzes the dephosphorylation of undecaprenyl diphosphate (UPP). Confers resistance to bacitracin. The polypeptide is Undecaprenyl-diphosphatase (Thermomicrobium roseum (strain ATCC 27502 / DSM 5159 / P-2)).